The following is a 139-amino-acid chain: Probable disulfide formation protein C 2 (139 aa).

The chain crosses the membrane as a helical span at residues 6-25; sequence KYHIAIAWMIATSAMLISLF. C35 and C38 are oxidised to a cystine. 2 helical membrane-spanning segments follow: residues 40–59 and 66–83; these read YQRM…MYRK and YAFP…YQIT. Residues C95 and C101 are joined by a disulfide bond. The chain crosses the membrane as a helical span at residues 110–133; the sequence is GFISIPMLSFIGFLVIIILIYIES.

Belongs to the DsbB family. BdbC subfamily.

The protein resides in the cell membrane. In terms of biological role, required for disulfide bond formation in some proteins. This Bacillus cereus (strain ATCC 10987 / NRS 248) protein is Probable disulfide formation protein C 2 (bdbC2).